Reading from the N-terminus, the 430-residue chain is 26S protease regulatory subunit 6A (430 aa).

218–225 (GPPGTGKT) contributes to the ATP binding site.

The protein belongs to the AAA ATPase family. In terms of assembly, component of the 19S proteasome regulatory particle complex. The 26S proteasome consists of a 20S core particle (CP) and two 19S regulatory subunits (RP). The regulatory particle is made of a lid composed of 9 subunits, a base containing 6 ATPases including the PSMC3 homolog rpt-5 and few additional components.

It is found in the cytoplasm. The protein localises to the nucleus. Its function is as follows. Component of the 26S proteasome, a multiprotein complex involved in the ATP-dependent degradation of ubiquitinated proteins. This complex plays a key role in the maintenance of protein homeostasis by removing misfolded or damaged proteins, which could impair cellular functions, and by removing proteins whose functions are no longer required. Therefore, the proteasome participates in numerous cellular processes, including cell cycle progression, apoptosis, or DNA damage repair. Belongs to the heterohexameric ring of AAA (ATPases associated with diverse cellular activities) proteins that unfolds ubiquitinated target proteins that are concurrently translocated into a proteolytic chamber and degraded into peptides. This Caenorhabditis elegans protein is 26S protease regulatory subunit 6A.